We begin with the raw amino-acid sequence, 199 residues long: Prolactin-1 (199 aa).

Disulfide bonds link cysteine 4–cysteine 11, cysteine 58–cysteine 174, and cysteine 191–cysteine 199. The N-linked (GlcNAc...) asparagine glycan is linked to asparagine 60.

Belongs to the somatotropin/prolactin family. In terms of processing, glycosylated.

Its subcellular location is the secreted. This Crocodylus novaeguineae (Crocodile) protein is Prolactin-1.